The primary structure comprises 232 residues: Phosphatidylserine decarboxylase proenzyme (232 aa).

S190 functions as the Schiff-base intermediate with substrate; via pyruvic acid in the catalytic mechanism. S190 is subject to Pyruvic acid (Ser); by autocatalysis.

It belongs to the phosphatidylserine decarboxylase family. PSD-A subfamily. Heterodimer of a large membrane-associated beta subunit and a small pyruvoyl-containing alpha subunit. Requires pyruvate as cofactor. Post-translationally, is synthesized initially as an inactive proenzyme. Formation of the active enzyme involves a self-maturation process in which the active site pyruvoyl group is generated from an internal serine residue via an autocatalytic post-translational modification. Two non-identical subunits are generated from the proenzyme in this reaction, and the pyruvate is formed at the N-terminus of the alpha chain, which is derived from the carboxyl end of the proenzyme. The post-translation cleavage follows an unusual pathway, termed non-hydrolytic serinolysis, in which the side chain hydroxyl group of the serine supplies its oxygen atom to form the C-terminus of the beta chain, while the remainder of the serine residue undergoes an oxidative deamination to produce ammonia and the pyruvoyl prosthetic group on the alpha chain.

The protein resides in the cell membrane. It catalyses the reaction a 1,2-diacyl-sn-glycero-3-phospho-L-serine + H(+) = a 1,2-diacyl-sn-glycero-3-phosphoethanolamine + CO2. It functions in the pathway phospholipid metabolism; phosphatidylethanolamine biosynthesis; phosphatidylethanolamine from CDP-diacylglycerol: step 2/2. In terms of biological role, catalyzes the formation of phosphatidylethanolamine (PtdEtn) from phosphatidylserine (PtdSer). This is Phosphatidylserine decarboxylase proenzyme from Rhodopseudomonas palustris (strain BisB5).